A 580-amino-acid polypeptide reads, in one-letter code: N(6)-adenosine-methyltransferase catalytic subunit METTL3 (580 aa).

The segment at 1–70 (MSDTWSSIQA…PKPSTASAVP (70 aa)) is disordered. An N-acetylserine; alternate modification is found at S2. S2 is modified (phosphoserine; alternate). Over residues 28–37 (QDSGHLDLRN) the composition is skewed to basic and acidic residues. Phosphoserine is present on residues S43, S48, and S50. Glycyl lysine isopeptide (Lys-Gly) (interchain with G-Cter in SUMO1) cross-links involve residues K177, K211, K212, and K215. The disordered stretch occupies residues 198–219 (LNSSASEPAKEPAKKSRKHAAS). The Nuclear localization signal signature appears at 210-215 (AKKSRK). Phosphoserine occurs at positions 219 and 243. Phosphothreonine is present on T348. A Phosphoserine modification is found at S350. Residues 377 to 378 (DI) and D395 each bind S-adenosyl-L-methionine. Residues 396–410 (PPWDIHMELPYGTLT) are gate loop 1. Interaction with METTL14 regions lie at residues 450–454 (ERVDE) and 464–480 (QRII…NHGK). The interphase loop stretch occupies residues 462–479 (QLQRIIRTGRTGHWLNHG). Residues 465–478 (RIIRTGRTGHWLNH) are positively charged region required for RNA-binding. Residues 507 to 515 (VRSTSHKPD) form a gate loop 2 region. S-adenosyl-L-methionine contacts are provided by residues K513, 536–539 (RPHN), and 549–550 (NQ).

Belongs to the MT-A70-like family. In terms of assembly, heterodimer; heterodimerizes with METTL14 to form an antiparallel heterodimer that constitutes an active methyltransferase. Component of the WMM complex, a N6-methyltransferase complex composed of a catalytic subcomplex, named MAC, and of an associated subcomplex, named MACOM. The MAC subcomplex is composed of METTL3 and METTL14. The MACOM subcomplex is composed of WTAP, ZC3H13, CBLL1/HAKAI, VIRMA, and, in some cases of RBM15 (RBM15 or RBM15B). Interacts with NCBP1/CBP80. Interacts with EIF4E. Interacts with EIF3B. Post-translationally, sumoylation inhibits the N6-adenosine-methyltransferase activity. Sumoylation does not affect subcellular location or interaction with METTL14. Desumoylated by SENP1. In terms of tissue distribution, widely expressed at low level. Expressed in spleen, thymus, prostate, testis, ovary, small intestine, colon and peripheral blood leukocytes.

Its subcellular location is the nucleus. It localises to the nucleus speckle. The protein resides in the cytoplasm. The enzyme catalyses an adenosine in mRNA + S-adenosyl-L-methionine = an N(6)-methyladenosine in mRNA + S-adenosyl-L-homocysteine + H(+). With respect to regulation, methyltransferase activity is regulated by miRNAs via a sequence pairing mechanism. Methyltransferase activity is inhibited by sumoylation. The METTL3-METTL14 heterodimer forms a N6-methyltransferase complex that methylates adenosine residues at the N(6) position of some RNAs and regulates various processes such as the circadian clock, differentiation of embryonic and hematopoietic stem cells, cortical neurogenesis, response to DNA damage, differentiation of T-cells and primary miRNA processing. In the heterodimer formed with METTL14, METTL3 constitutes the catalytic core. N6-methyladenosine (m6A), which takes place at the 5'-[AG]GAC-3' consensus sites of some mRNAs, plays a role in mRNA stability, processing, translation efficiency and editing. M6A acts as a key regulator of mRNA stability: methylation is completed upon the release of mRNA into the nucleoplasm and promotes mRNA destabilization and degradation. In embryonic stem cells (ESCs), m6A methylation of mRNAs encoding key naive pluripotency-promoting transcripts results in transcript destabilization, promoting differentiation of ESCs. M6A regulates the length of the circadian clock: acts as an early pace-setter in the circadian loop by putting mRNA production on a fast-track for facilitating nuclear processing, thereby providing an early point of control in setting the dynamics of the feedback loop. M6A also regulates circadian regulation of hepatic lipid metabolism. M6A regulates spermatogonial differentiation and meiosis and is essential for male fertility and spermatogenesis. Also required for oogenesis. Involved in the response to DNA damage: in response to ultraviolet irradiation, METTL3 rapidly catalyzes the formation of m6A on poly(A) transcripts at DNA damage sites, leading to the recruitment of POLK to DNA damage sites. M6A is also required for T-cell homeostasis and differentiation: m6A methylation of transcripts of SOCS family members (SOCS1, SOCS3 and CISH) in naive T-cells promotes mRNA destabilization and degradation, promoting T-cell differentiation. Inhibits the type I interferon response by mediating m6A methylation of IFNB. M6A also takes place in other RNA molecules, such as primary miRNA (pri-miRNAs). Mediates m6A methylation of Xist RNA, thereby participating in random X inactivation: m6A methylation of Xist leads to target YTHDC1 reader on Xist and promote transcription repression activity of Xist. M6A also regulates cortical neurogenesis: m6A methylation of transcripts related to transcription factors, neural stem cells, the cell cycle and neuronal differentiation during brain development promotes their destabilization and decay, promoting differentiation of radial glial cells. METTL3 mediates methylation of pri-miRNAs, marking them for recognition and processing by DGCR8. Acts as a positive regulator of mRNA translation independently of the methyltransferase activity: promotes translation by interacting with the translation initiation machinery in the cytoplasm. Its overexpression in a number of cancer cells suggests that it may participate in cancer cell proliferation by promoting mRNA translation. During human coronavirus SARS-CoV-2 infection, adds m6A modifications in SARS-CoV-2 RNA leading to decreased RIGI binding and subsequently dampening the sensing and activation of innate immune responses. This chain is N(6)-adenosine-methyltransferase catalytic subunit METTL3, found in Homo sapiens (Human).